Here is a 73-residue protein sequence, read N- to C-terminus: Translation initiation factor IF-1 (73 aa).

In terms of domain architecture, S1-like spans 1 to 73 (MAKKDGAIEV…TRGRIVYRYK (73 aa)).

The protein belongs to the IF-1 family. As to quaternary structure, component of the 30S ribosomal translation pre-initiation complex which assembles on the 30S ribosome in the order IF-2 and IF-3, IF-1 and N-formylmethionyl-tRNA(fMet); mRNA recruitment can occur at any time during PIC assembly.

It localises to the cytoplasm. Its function is as follows. One of the essential components for the initiation of protein synthesis. Stabilizes the binding of IF-2 and IF-3 on the 30S subunit to which N-formylmethionyl-tRNA(fMet) subsequently binds. Helps modulate mRNA selection, yielding the 30S pre-initiation complex (PIC). Upon addition of the 50S ribosomal subunit IF-1, IF-2 and IF-3 are released leaving the mature 70S translation initiation complex. This is Translation initiation factor IF-1 from Mycolicibacterium gilvum (strain PYR-GCK) (Mycobacterium gilvum (strain PYR-GCK)).